We begin with the raw amino-acid sequence, 938 residues long: Isoleucine--tRNA ligase (938 aa).

The 'HIGH' region signature appears at 58-68 (PYANGSIHIGH). Position 183 is an N6-acetyllysine (Lys183). Glu561 contacts L-isoleucyl-5'-AMP. The short motif at 602–606 (KMSKS) is the 'KMSKS' region element. ATP is bound at residue Lys605. The Zn(2+) site is built by Cys901, Cys904, Cys921, and Cys924.

The protein belongs to the class-I aminoacyl-tRNA synthetase family. IleS type 1 subfamily. As to quaternary structure, monomer. The cofactor is Zn(2+).

The protein localises to the cytoplasm. It catalyses the reaction tRNA(Ile) + L-isoleucine + ATP = L-isoleucyl-tRNA(Ile) + AMP + diphosphate. Its function is as follows. Catalyzes the attachment of isoleucine to tRNA(Ile). As IleRS can inadvertently accommodate and process structurally similar amino acids such as valine, to avoid such errors it has two additional distinct tRNA(Ile)-dependent editing activities. One activity is designated as 'pretransfer' editing and involves the hydrolysis of activated Val-AMP. The other activity is designated 'posttransfer' editing and involves deacylation of mischarged Val-tRNA(Ile). The protein is Isoleucine--tRNA ligase of Escherichia coli (strain 55989 / EAEC).